The sequence spans 329 residues: DNA-directed RNA polymerase subunit alpha (329 aa).

Residues Met1–Arg234 form an alpha N-terminal domain (alpha-NTD) region. An alpha C-terminal domain (alpha-CTD) region spans residues Phe248–Leu329.

This sequence belongs to the RNA polymerase alpha chain family. In terms of assembly, homodimer. The RNAP catalytic core consists of 2 alpha, 1 beta, 1 beta' and 1 omega subunit. When a sigma factor is associated with the core the holoenzyme is formed, which can initiate transcription.

It catalyses the reaction RNA(n) + a ribonucleoside 5'-triphosphate = RNA(n+1) + diphosphate. DNA-dependent RNA polymerase catalyzes the transcription of DNA into RNA using the four ribonucleoside triphosphates as substrates. This Shewanella putrefaciens (strain CN-32 / ATCC BAA-453) protein is DNA-directed RNA polymerase subunit alpha.